The following is a 553-amino-acid chain: Carboxypeptidase Y homolog A (553 aa).

A signal peptide spans 1–17 (MRVLSTTLLIGAAAAAV). Positions 18 to 134 (SPPQQVLQAP…RLEAFDLRVK (117 aa)) are excised as a propeptide. Disulfide bonds link C189–C428, C323–C337, C347–C370, C354–C363, and C392–C398. N-linked (GlcNAc...) asparagine glycosylation occurs at N220. S276 is a catalytic residue. Residue D467 is part of the active site. N518 is a glycosylation site (N-linked (GlcNAc...) asparagine). H529 is an active-site residue.

It belongs to the peptidase S10 family.

It is found in the vacuole. It catalyses the reaction Release of a C-terminal amino acid with broad specificity.. In terms of biological role, vacuolar carboxypeptidase involved in degradation of small peptides. Digests preferentially peptides containing an aliphatic or hydrophobic residue in P1' position, as well as methionine, leucine or phenylalanine in P1 position of ester substrate. In Talaromyces stipitatus (strain ATCC 10500 / CBS 375.48 / QM 6759 / NRRL 1006) (Penicillium stipitatum), this protein is Carboxypeptidase Y homolog A (cpyA).